The following is a 150-amino-acid chain: Putative biopolymer transport protein ExbB-like 2 (150 aa).

A run of 3 helical transmembrane segments spans residues 5 to 25 (VDYGIIGFLIFLSVIVIAIAI), 63 to 83 (APYIGLLGTVMGIMLTFMDLG), and 97 to 117 (LALALKATGMGLLVAIPAIVI).

It belongs to the ExbB/TolQ family.

The protein localises to the cell inner membrane. This chain is Putative biopolymer transport protein ExbB-like 2, found in Helicobacter pylori (strain J99 / ATCC 700824) (Campylobacter pylori J99).